The primary structure comprises 367 residues: Germination protease (367 aa).

Positions Met-1 to Asp-15 are excised as a propeptide.

This sequence belongs to the peptidase A25 family. As to quaternary structure, homotetramer. Autoproteolytically processed. The inactive tetrameric zymogen termed p46 autoprocesses to a smaller form termed p41, which is active only during spore germination.

The enzyme catalyses Endopeptidase action with P4 Glu or Asp, P1 preferably Glu &gt; Asp, P1' hydrophobic and P2' Ala.. In terms of biological role, initiates the rapid degradation of small, acid-soluble proteins during spore germination. The polypeptide is Germination protease (Bacillus cereus (strain G9842)).